The primary structure comprises 293 residues: Energy-coupling factor transporter ATP-binding protein EcfA2 (293 aa).

The ABC transporter domain maps to 3-246 (ITFQKVEHRY…ADELEKIGVD (244 aa)). 40 to 47 (GHTGSGKS) lines the ATP pocket.

It belongs to the ABC transporter superfamily. Energy-coupling factor EcfA family. Forms a stable energy-coupling factor (ECF) transporter complex composed of 2 membrane-embedded substrate-binding proteins (S component), 2 ATP-binding proteins (A component) and 2 transmembrane proteins (T component).

The protein localises to the cell membrane. Its function is as follows. ATP-binding (A) component of a common energy-coupling factor (ECF) ABC-transporter complex. Unlike classic ABC transporters this ECF transporter provides the energy necessary to transport a number of different substrates. This Bacillus cereus (strain ATCC 14579 / DSM 31 / CCUG 7414 / JCM 2152 / NBRC 15305 / NCIMB 9373 / NCTC 2599 / NRRL B-3711) protein is Energy-coupling factor transporter ATP-binding protein EcfA2.